The chain runs to 300 residues: Nuclear egress protein 1 (300 aa).

A CCCH-type zinc finger spans residues 90-217 (CLSLSGMGYY…YIVFPGKALH (128 aa)).

The protein belongs to the herpesviridae NEC1 protein family. In terms of assembly, forms a heterohexameric complex with NEC2. Interacts with capsid vertex specific component 2/CVC2; this interaction directs the capsid to the host inner nuclear membrane to initiate budding. Phosphorylated at serine residues in the N-terminus. This phosphorylation regulates the localization within the inner nuclear membrane.

The protein resides in the host nucleus inner membrane. Its function is as follows. Plays an essential role in virion nuclear egress, the first step of virion release from infected cell. Within the host nucleus, NEC1 interacts with the newly formed capsid through the vertexes and directs it to the inner nuclear membrane by associating with NEC2. Induces the budding of the capsid at the inner nuclear membrane as well as its envelopment into the perinuclear space. There, the NEC1/NEC2 complex promotes the fusion of the enveloped capsid with the outer nuclear membrane and the subsequent release of the viral capsid into the cytoplasm where it will reach the secondary budding sites in the host Golgi or trans-Golgi network. The protein is Nuclear egress protein 1 of Gallid herpesvirus 2 (strain Chicken/Md5/ATCC VR-987) (GaHV-2).